Here is a 233-residue protein sequence, read N- to C-terminus: Purine nucleoside phosphorylase DeoD-type (233 aa).

His4 provides a ligand contact to a purine D-ribonucleoside. Phosphate is bound by residues Gly20, Arg24, Arg43, and 87–90 (RIGT). Residues 179 to 181 (EME) and 203 to 204 (SD) each bind a purine D-ribonucleoside. The active-site Proton donor is Asp204.

The protein belongs to the PNP/UDP phosphorylase family. In terms of assembly, homohexamer; trimer of homodimers.

The catalysed reaction is a purine D-ribonucleoside + phosphate = a purine nucleobase + alpha-D-ribose 1-phosphate. The enzyme catalyses a purine 2'-deoxy-D-ribonucleoside + phosphate = a purine nucleobase + 2-deoxy-alpha-D-ribose 1-phosphate. Its function is as follows. Catalyzes the reversible phosphorolytic breakdown of the N-glycosidic bond in the beta-(deoxy)ribonucleoside molecules, with the formation of the corresponding free purine bases and pentose-1-phosphate. The protein is Purine nucleoside phosphorylase DeoD-type of Thermoanaerobacter pseudethanolicus (strain ATCC 33223 / 39E) (Clostridium thermohydrosulfuricum).